The following is a 130-amino-acid chain: Phosphomevalonate dehydratase small subunit (130 aa).

Serine 62 (proton acceptor) is an active-site residue.

This sequence belongs to the AcnX type II small subunit family. In terms of assembly, heterodimer composed of a large subunit (PMDh-L) and a small subunit (PMDh-S).

The enzyme catalyses (R)-5-phosphomevalonate = (2E)-3-methyl-5-phosphooxypent-2-enoate + H2O. It functions in the pathway isoprenoid biosynthesis; isopentenyl diphosphate biosynthesis via mevalonate pathway. Its function is as follows. Component of a hydro-lyase that catalyzes the dehydration of mevalonate 5-phosphate (MVA5P) to form trans-anhydromevalonate 5-phosphate (tAHMP). Involved in the archaeal mevalonate (MVA) pathway, which provides fundamental precursors for isoprenoid biosynthesis, such as isopentenyl diphosphate (IPP) and dimethylallyl diphosphate (DMAPP). The sequence is that of Phosphomevalonate dehydratase small subunit from Thermococcus onnurineus (strain NA1).